Here is a 346-residue protein sequence, read N- to C-terminus: Short-wave-sensitive opsin 1 (346 aa).

At 1-31 (MSGEDEFYLFQNISSVGPWDGPQYHIAPVWA) the chain is on the extracellular side. N-linked (GlcNAc...) asparagine glycosylation is present at asparagine 12. Residues 32 to 56 (FHLQAAFMGFVFFAGTPLNATVLVA) form a helical membrane-spanning segment. Topologically, residues 57-68 (TLHYKKLRQPLN) are cytoplasmic. Residues 69–94 (YILVNVSLGGFLFCIFSVFTVFIASC) traverse the membrane as a helical segment. The Extracellular segment spans residues 95–108 (HGYFLFGRHVCALE). The cysteines at positions 105 and 182 are disulfide-linked. The chain crosses the membrane as a helical span at residues 109-128 (AFLGSVAGLVTGWSLAFLAF). The Cytoplasmic portion of the chain corresponds to 129 to 147 (ERYLVICKPFGNIRFNSKH). Residues 148–171 (ALTVVLITWTIGIGVSIPPFFGWS) traverse the membrane as a helical segment. Residues 172-197 (RFIPEGLQCSCGPDWYTVGTKYRSEH) are Extracellular-facing. Residues 198-225 (YTWFLFIFCFIIPLSLICFSYFQLLRTL) form a helical membrane-spanning segment. At 226–247 (RAVAAQQQESATTQKAEREVSH) the chain is on the cytoplasmic side. The helical transmembrane segment at 248-271 (MVVVMVGSFCLCYVPYAALAMYMV) threads the bilayer. Over 272 to 279 (NNRNHGLY) the chain is Extracellular. The helical transmembrane segment at 280–304 (LRLVTIPAFFSKSSCVYNPIIYCFM) threads the bilayer. Residue lysine 291 is modified to N6-(retinylidene)lysine. Topologically, residues 305-346 (NKQFRACILEMVCRKPMTDESDMSGSQKTEVSTVSSSKVGPH) are cytoplasmic. The segment at 322–346 (TDESDMSGSQKTEVSTVSSSKVGPH) is disordered. The segment covering 330-346 (SQKTEVSTVSSSKVGPH) has biased composition (low complexity).

The protein belongs to the G-protein coupled receptor 1 family. Opsin subfamily. Phosphorylated on some or all of the serine and threonine residues present in the C-terminal region. Expressed in cone photoreceptor cells.

The protein resides in the cell membrane. It is found in the photoreceptor inner segment. It localises to the cell projection. The protein localises to the cilium. Its subcellular location is the photoreceptor outer segment. The protein resides in the cytoplasm. It is found in the perinuclear region. In terms of biological role, visual pigments are the light-absorbing molecules that mediate vision. They consist of an apoprotein, opsin, covalently linked to cis-retinal. Required for the maintenance of cone outer segment organization in the ventral retina, but not essential for the maintenance of functioning cone photoreceptors. Involved in ensuring correct abundance and localization of retinal membrane proteins. May increase spectral sensitivity in dim light. This is Short-wave-sensitive opsin 1 (Opn1sw) from Rattus norvegicus (Rat).